The chain runs to 394 residues: Argininosuccinate synthase (394 aa).

8 to 16 is a binding site for ATP; sequence AYSGGLDTS. The L-citrulline site is built by tyrosine 86 and serine 91. Glycine 116 is a binding site for ATP. Residues threonine 118, asparagine 122, and aspartate 123 each contribute to the L-aspartate site. Residue asparagine 122 participates in L-citrulline binding. Residues arginine 126, serine 172, serine 181, glutamate 256, and tyrosine 268 each contribute to the L-citrulline site.

This sequence belongs to the argininosuccinate synthase family. Type 1 subfamily. In terms of assembly, homotetramer.

It is found in the cytoplasm. The enzyme catalyses L-citrulline + L-aspartate + ATP = 2-(N(omega)-L-arginino)succinate + AMP + diphosphate + H(+). It functions in the pathway amino-acid biosynthesis; L-arginine biosynthesis; L-arginine from L-ornithine and carbamoyl phosphate: step 2/3. In Methanococcoides burtonii (strain DSM 6242 / NBRC 107633 / OCM 468 / ACE-M), this protein is Argininosuccinate synthase.